The primary structure comprises 333 residues: Ribosomal RNA small subunit methyltransferase C (333 aa).

Belongs to the methyltransferase superfamily. RsmC family. As to quaternary structure, monomer.

It is found in the cytoplasm. The enzyme catalyses guanosine(1207) in 16S rRNA + S-adenosyl-L-methionine = N(2)-methylguanosine(1207) in 16S rRNA + S-adenosyl-L-homocysteine + H(+). In terms of biological role, specifically methylates the guanine in position 1207 of 16S rRNA in the 30S particle. This chain is Ribosomal RNA small subunit methyltransferase C, found in Mannheimia succiniciproducens (strain KCTC 0769BP / MBEL55E).